The chain runs to 593 residues: Kelch-like protein 2 (593 aa).

The tract at residues 1–29 (MESPPLPPACTKQGHQKPLDSKDENPEKH) is disordered. The span at 17 to 29 (KPLDSKDENPEKH) shows a compositional bias: basic and acidic residues. The BTB domain maps to 56–123 (CDVTIVAEDM…VYTAEIQVTE (68 aa)). Kelch repeat units follow at residues 308 to 353 (LMVV…YMAG), 354 to 400 (LVFA…VLNG), 402 to 447 (LYAV…VVGG), 449 to 496 (LYAV…VLNN), 497 to 543 (LLYA…AVNG), and 545 to 591 (LYVV…VIDK).

Component of the BCR(KLHL2) E3 ubiquitin ligase complex, at least composed of CUL3 and KLHL2 and RBX1. Binds actin. Interacts with KLHL12. Interacts (via N-terminus) with FYN (via SH3 domain). In terms of tissue distribution, detected in brain neurons, oligodendrocytes and astrocytes (at protein level).

It localises to the cytoplasm. The protein localises to the cytoskeleton. Its subcellular location is the cell projection. The protein resides in the ruffle. It is found in the lamellipodium. It localises to the cytosol. It participates in protein modification; protein ubiquitination. In terms of biological role, substrate-specific adapter of a BCR (BTB-CUL3-RBX1) E3 ubiquitin ligase complex that mediates the ubiquitination of target proteins, such as NPTXR, WNK1, WNK3 and WNK4, leading most often to their proteasomal degradation. The BCR(KLHL2) complex catalyzes ubiquitination and degradation of NPTXR. Responsible for degradative ubiquitination of the WNK kinases WNK1, WNK3 and WNK4. Plays a role in the reorganization of the actin cytoskeleton. Promotes growth of cell projections in oligodendrocyte precursors. In Rattus norvegicus (Rat), this protein is Kelch-like protein 2.